Reading from the N-terminus, the 308-residue chain is MIRHFLRDDDLSPTEQAEVLQLAAELKREPFSRRPLDGPRGVAVIFDKNSTRTRFSFEMGIAQLGGHAVVVDGRSTQLGREETLPDTAKVLSRFVDAIVWRTFGQDRLQAMASTATVPVVNALSDEFHPCQVLADLQTITERRGSLKGLRLSYFGDGANNMAHSLMLGGVTAGMHVTIAAPDGFHPDPSVVGAAEQRAETTGASVRLTADAHVAAAGADVLVTDTWTSMGQEDDGLDRVKPFRPFQVNEQLLAAADSEVVVLHCLPAHRGDEITDQVMDGPASAVWDEAENRLHAQKALLVWLLERGR.

Carbamoyl phosphate-binding positions include 50–53, glutamine 77, arginine 101, and 128–131; these read STRT and HPCQ. Residues asparagine 160, aspartate 224, and 228 to 229 each bind L-ornithine; that span reads SM. Carbamoyl phosphate-binding positions include 264–265 and arginine 292; that span reads CL.

Belongs to the aspartate/ornithine carbamoyltransferase superfamily. OTCase family.

The protein resides in the cytoplasm. It catalyses the reaction carbamoyl phosphate + L-ornithine = L-citrulline + phosphate + H(+). It functions in the pathway amino-acid biosynthesis; L-arginine biosynthesis; L-arginine from L-ornithine and carbamoyl phosphate: step 1/3. Reversibly catalyzes the transfer of the carbamoyl group from carbamoyl phosphate (CP) to the N(epsilon) atom of ornithine (ORN) to produce L-citrulline. The polypeptide is Ornithine carbamoyltransferase (Mycobacterium ulcerans (strain Agy99)).